Consider the following 631-residue polypeptide: uncharacterized protein (631 aa).

Residues 1-19 (MSKMGSSSMGELQDGITQE) show a composition bias toward polar residues. The disordered stretch occupies residues 1 to 92 (MSKMGSSSMG…EENYPRLQTT (92 aa)). Residues 67–76 (KKKKKKKLKK) show a composition bias toward basic residues. An Exonuclease domain is found at 277–426 (LAIDCEMVRT…EDALACVDLL (150 aa)). The segment covering 517 to 526 (ANRNTKQENN) has biased composition (polar residues). The disordered stretch occupies residues 517 to 540 (ANRNTKQENNSDTDTENDSVEEDQ). Residues 527–540 (SDTDTENDSVEEDQ) show a composition bias toward acidic residues.

The protein belongs to the REXO1/REXO3 family.

Its subcellular location is the nucleus. This is an uncharacterized protein from Schizosaccharomyces pombe (strain 972 / ATCC 24843) (Fission yeast).